An 85-amino-acid chain; its full sequence is Beta-toxin Ct6 (85 aa).

The signal sequence occupies residues 1–18; sequence MKTFVLALCLVLIGMVYA. The 66-residue stretch at 19 to 84 folds into the LCN-type CS-alpha/beta domain; sequence KDGYLVSKHT…VYPLPNKSCG (66 aa). Cystine bridges form between cysteine 30–cysteine 83, cysteine 34–cysteine 59, cysteine 43–cysteine 64, and cysteine 47–cysteine 66. Cysteine 83 bears the Cysteine amide mark.

It belongs to the long (4 C-C) scorpion toxin superfamily. Sodium channel inhibitor family. Beta subfamily. In terms of tissue distribution, expressed by the venom gland.

The protein resides in the secreted. Its function is as follows. Beta toxins bind voltage-independently at site-4 of sodium channels (Nav) and shift the voltage of activation toward more negative potentials thereby affecting sodium channel activation and promoting spontaneous and repetitive firing. This chain is Beta-toxin Ct6, found in Centruroides tecomanus (Scorpion).